A 230-amino-acid polypeptide reads, in one-letter code: Methyltransferase aurB (230 aa).

Belongs to the methyltransferase superfamily.

The protein operates within polyketide biosynthesis. Functionally, methyltransferase; part of the gene cluster that mediates the biosynthesis of aurovertins, fungal polyketides that exhibit potent inhibition of adenosine triphosphate synthase. Tha biosynthesis starts with the HR-PKS aurA that selects propionate as the starter unit; synthesizes a hexa-ene chain through the repeated functions of the KR and DH domains in the first six iterations; selectively introduces three alpha-methyl substitutions at C4, C6, and C16 using the S-adensylmethionine-dependent cMET; and shuts off KR and DH in the last three iterations to afford a 1,3,5-triketo portion that can undergo intramolecular cyclization to yield the alpha-pyrone intermediate. AurE may act as a cyclase and enhances the rate of pyrone formation and product release of aurA. The methyltransferase aurB then methylates the C17 hydroxyl group. C17 methylation is required to initiate epoxidation by the downstream monooxygenase aurC. The monooxygenase aurC and the epoxide hydrolase aurD can iteratively transform the terminal triene portion of the methylated precursor into the dioxabicyclo[3.2.1]octane scaffold of aurovertin E. Epoxidation modifications of the precursor occur in two separate steps; bis-epoxidation of the two terminal olefins takes place first, followed by another epoxidation that occurs at C7-C8 after tetrahydrofuran formation. The O-acyltransferase aurG converts aurovertin E to aurovertin A. The polypeptide is Methyltransferase aurB (Calcarisporium arbuscula (Dendryphion arbuscula)).